Reading from the N-terminus, the 4334-residue chain is Cytoplasmic dynein 2 heavy chain 1 (4334 aa).

The segment at 1–1704 (MSSDSRKTFV…KVAMAEATFD (1704 aa)) is stem. 150-157 (LGTAVRKG) is an ATP binding site. Residues 1026–1097 (QEAKGLTAKL…AHLEEQKGNL (72 aa)) are a coiled coil. 4 AAA regions span residues 1705-1929 (YTWE…VLGI), 1996-2211 (KALA…KAFQ), 2299-2544 (GMDE…WING), and 2641-2882 (GYER…SSGS). ATP-binding positions include 1743–1750 (GPAGTGKT), 2034–2041 (GPSGSGKS), 2334–2341 (GPEGCGKG), and 2679–2686 (GNSGVGRR). The tract at residues 2897–3185 (QIYNRKRTQV…ISVDKAESVL (289 aa)) is stalk. 2 coiled-coil regions span residues 2930–2998 (LSAE…SEVQ) and 3120–3199 (ERVS…RGEK). 2 AAA regions span residues 3260–3492 (LSSE…TVEK) and 3701–3917 (MSSF…VITL).

Belongs to the dynein heavy chain family. The cytoplasmic dynein complex 2 is probably composed by a DHC1B homodimer and a number of D1BLIC light intermediate chains. Interacts with FAP133, FLA10 and LC8.

It localises to the cytoplasm. The protein resides in the cytoskeleton. Its subcellular location is the flagellum basal body. It is found in the cell projection. The protein localises to the cilium. It localises to the flagellum membrane. Functionally, may function as a motor for intraflagellar retrograde transport. Functions in flagellar biogenesis. This chain is Cytoplasmic dynein 2 heavy chain 1 (DHC1B), found in Chlamydomonas reinhardtii (Chlamydomonas smithii).